A 345-amino-acid chain; its full sequence is S-adenosylmethionine:tRNA ribosyltransferase-isomerase (345 aa).

The protein belongs to the QueA family. In terms of assembly, monomer.

It localises to the cytoplasm. The catalysed reaction is 7-aminomethyl-7-carbaguanosine(34) in tRNA + S-adenosyl-L-methionine = epoxyqueuosine(34) in tRNA + adenine + L-methionine + 2 H(+). It participates in tRNA modification; tRNA-queuosine biosynthesis. Its function is as follows. Transfers and isomerizes the ribose moiety from AdoMet to the 7-aminomethyl group of 7-deazaguanine (preQ1-tRNA) to give epoxyqueuosine (oQ-tRNA). This Helicobacter pylori (strain HPAG1) protein is S-adenosylmethionine:tRNA ribosyltransferase-isomerase.